Here is a 117-residue protein sequence, read N- to C-terminus: Large ribosomal subunit protein bL20 (117 aa).

This sequence belongs to the bacterial ribosomal protein bL20 family.

Its function is as follows. Binds directly to 23S ribosomal RNA and is necessary for the in vitro assembly process of the 50S ribosomal subunit. It is not involved in the protein synthesizing functions of that subunit. The sequence is that of Large ribosomal subunit protein bL20 from Rickettsia bellii (strain OSU 85-389).